A 150-amino-acid chain; its full sequence is MQVILLDKVANLGSLGDQVNVKAGYARNFLVPQGKAVPATKKNVEFFETRRAELEAKVADVLAAAHARAEKINALGTVTLASKSGDEGKLFGSIGTRDIADAVTAAGVEVAKSEVRLPNGVLRTTGEHEVDFQVHSEVFAKLTVNIVAEA.

This sequence belongs to the bacterial ribosomal protein bL9 family.

In terms of biological role, binds to the 23S rRNA. In Erwinia tasmaniensis (strain DSM 17950 / CFBP 7177 / CIP 109463 / NCPPB 4357 / Et1/99), this protein is Large ribosomal subunit protein bL9.